Here is a 1068-residue protein sequence, read N- to C-terminus: Ubiquitin-protein ligase E3B (1068 aa).

N-acetylmethionine is present on M1. The region spanning 29 to 58 is the IQ domain; it reads RERAAVVIQAHVRSFLCRSRLQRDIRREID. At S419 the chain carries Phosphoserine. Residues 702–1068 form the HECT domain; the sequence is SQHAMKGVIR…ISMNTGFELS (367 aa). The active-site Glycyl thioester intermediate is C1036.

As to expression, widely expressed.

Its subcellular location is the postsynaptic density. The enzyme catalyses S-ubiquitinyl-[E2 ubiquitin-conjugating enzyme]-L-cysteine + [acceptor protein]-L-lysine = [E2 ubiquitin-conjugating enzyme]-L-cysteine + N(6)-ubiquitinyl-[acceptor protein]-L-lysine.. It functions in the pathway protein modification; protein ubiquitination. In terms of biological role, E3 ubiquitin-protein ligase which accepts ubiquitin from an E2 ubiquitin-conjugating enzyme in the form of a thioester and then directly transfers the ubiquitin to targeted substrates. Ubiquitinates BCKDK and targets it for degradation, thereby regulating various metabolic processes. Involved in the positive regulation of neurite branching in hippocampal neurons and the control of neuronal spine number and morphology, through the ubiquitination of PPP3CC. This Homo sapiens (Human) protein is Ubiquitin-protein ligase E3B (UBE3B).